A 119-amino-acid polypeptide reads, in one-letter code: Large ribosomal subunit protein bL20 (119 aa).

Belongs to the bacterial ribosomal protein bL20 family.

Binds directly to 23S ribosomal RNA and is necessary for the in vitro assembly process of the 50S ribosomal subunit. It is not involved in the protein synthesizing functions of that subunit. In Halalkalibacterium halodurans (strain ATCC BAA-125 / DSM 18197 / FERM 7344 / JCM 9153 / C-125) (Bacillus halodurans), this protein is Large ribosomal subunit protein bL20.